The sequence spans 430 residues: Tol-Pal system protein TolB (430 aa).

The first 21 residues, 1-21 (MKQALRVAFGFLMLWAAVLHA), serve as a signal peptide directing secretion.

It belongs to the TolB family. In terms of assembly, the Tol-Pal system is composed of five core proteins: the inner membrane proteins TolA, TolQ and TolR, the periplasmic protein TolB and the outer membrane protein Pal. They form a network linking the inner and outer membranes and the peptidoglycan layer.

Its subcellular location is the periplasm. In terms of biological role, part of the Tol-Pal system, which plays a role in outer membrane invagination during cell division and is important for maintaining outer membrane integrity. TolB occupies a key intermediary position in the Tol-Pal system because it communicates directly with both membrane-embedded components, Pal in the outer membrane and TolA in the inner membrane. The chain is Tol-Pal system protein TolB from Salmonella choleraesuis (strain SC-B67).